The primary structure comprises 223 residues: Probable transaldolase (223 aa).

Catalysis depends on K91, which acts as the Schiff-base intermediate with substrate.

This sequence belongs to the transaldolase family. Type 3B subfamily.

It localises to the cytoplasm. It carries out the reaction D-sedoheptulose 7-phosphate + D-glyceraldehyde 3-phosphate = D-erythrose 4-phosphate + beta-D-fructose 6-phosphate. The protein operates within carbohydrate degradation; pentose phosphate pathway; D-glyceraldehyde 3-phosphate and beta-D-fructose 6-phosphate from D-ribose 5-phosphate and D-xylulose 5-phosphate (non-oxidative stage): step 2/3. Transaldolase is important for the balance of metabolites in the pentose-phosphate pathway. This is Probable transaldolase from Chlorobium phaeobacteroides (strain BS1).